Reading from the N-terminus, the 384-residue chain is GDSL esterase/lipase At1g28670 (384 aa).

A signal peptide spans 1 to 24 (MASSLKKLISSFLLVLYSTTIIVA). Ser42 functions as the Nucleophile in the catalytic mechanism. Asn105, Asn138, and Asn321 each carry an N-linked (GlcNAc...) asparagine glycan. Active-site residues include Asp346 and His349.

It belongs to the 'GDSL' lipolytic enzyme family.

The protein resides in the secreted. The protein is GDSL esterase/lipase At1g28670 of Arabidopsis thaliana (Mouse-ear cress).